Consider the following 291-residue polypeptide: Probable cell wall amidase LytH (291 aa).

A signal peptide spans 1–40 (MKKIEAWLSKKGLKNKRTLIVVIAFVLFIIFLFLLLNSNS). The SH3b domain maps to 41–105 (EDSGNITITE…WIAGWHTNLD (65 aa)). The interval 118-140 (QGKTIVLDPGHGGSDQGASSNTK) is disordered. A MurNAc-LAA domain is found at 122-286 (IVLDPGHGGS…LEQAIVDGLK (165 aa)).

It belongs to the N-acetylmuramoyl-L-alanine amidase 3 family.

The protein resides in the secreted. Its function is as follows. Probably involved in cell-wall metabolism. The chain is Probable cell wall amidase LytH (lytH) from Staphylococcus aureus (strain USA300).